The sequence spans 117 residues: Ribonuclease P protein component (117 aa).

This sequence belongs to the RnpA family. As to quaternary structure, consists of a catalytic RNA component (M1 or rnpB) and a protein subunit.

The enzyme catalyses Endonucleolytic cleavage of RNA, removing 5'-extranucleotides from tRNA precursor.. RNaseP catalyzes the removal of the 5'-leader sequence from pre-tRNA to produce the mature 5'-terminus. It can also cleave other RNA substrates such as 4.5S RNA. The protein component plays an auxiliary but essential role in vivo by binding to the 5'-leader sequence and broadening the substrate specificity of the ribozyme. This is Ribonuclease P protein component from Staphylococcus aureus (strain bovine RF122 / ET3-1).